The sequence spans 308 residues: Phenylcoumaran benzylic ether reductase Pyrc5 (308 aa).

Residues 11-17 (GGTGYIG), R36, and K45 contribute to the NADP(+) site. The active-site Proton acceptor is the K133. R137 serves as a coordination point for NADP(+).

Belongs to the NmrA-type oxidoreductase family. Isoflavone reductase subfamily.

It carries out the reaction (-)-dehydrodiconiferyl alcohol + NADPH + H(+) = (S)-isodihydrodehydrodiconiferyl alcohol + NADP(+). The catalysed reaction is (+)-dehydrodiconiferyl alcohol + NADPH + H(+) = (R)-isodihydrodehydrodiconiferyl alcohol + NADP(+). In terms of biological role, oxidoreductase involved in lignan biosynthesis. Catalyzes the NADPH-dependent reduction of phenylcoumaran benzylic ethers. Converts dehydrodiconiferyl alcohol (DDC) to isodihydrodehydrodiconiferyl alcohol (IDDDC). The sequence is that of Phenylcoumaran benzylic ether reductase Pyrc5 from Pyrus communis (Pear).